The chain runs to 325 residues: MEIFDYDNVLLLPRKCRVESRSECDASVTLGQRSFRLPVVPANMKTVVDEKICRWLASNGYFYVMHRFDLDNVQFVRDMHAAGCFASISLGVKQPDYDTVDRLVAEGLCPEYITIDIAHGHADTVKAMIAYLKQHLPQAFVIAGNVATPEAIIDLENWGADATKVGVGPGKVCITKLKTGFGTGGWQLSALKWCARVATKPIIADGGIRSHGDIAKSIRFGATMVMIGSLFAGHEESPGKTVEVDGEQFKEYYGSASDFNKGEYKHVEGKRILEPIKGRLADTLVEMEQDVQSSISYSGGRRLMDIRKVNYVILGGDNAGEHLLM.

Cysteine 173 functions as the Thioimidate intermediate in the catalytic mechanism. Residue 202–225 (IIADGGIRSHGDIAKSIRFGATMV) participates in NADP(+) binding.

Belongs to the IMPDH/GMPR family. GuaC type 2 subfamily.

The enzyme catalyses IMP + NH4(+) + NADP(+) = GMP + NADPH + 2 H(+). Its function is as follows. Catalyzes the irreversible NADPH-dependent deamination of GMP to IMP. It functions in the conversion of nucleobase, nucleoside and nucleotide derivatives of G to A nucleotides, and in maintaining the intracellular balance of A and G nucleotides. The chain is GMP reductase from Paracidovorax citrulli (strain AAC00-1) (Acidovorax citrulli).